The sequence spans 513 residues: ABC transporter H family member 2 (513 aa).

The ABC transporter domain maps to 39-280; it reads LTMKNIHKTY…EHYQKLYKEC (242 aa). 75–82 serves as a coordination point for ATP; the sequence is GTSGGGKT. Positions 291–471 are disordered; it reads VTSVFKNDDD…SSSYSNNNNN (181 aa). Low complexity predominate over residues 324-360; that stretch reads SYNNNNSNLNNNSNSNSNNNSNNNNSKNYASSSSSSS. The span at 361-386 shows a compositional bias: polar residues; sequence VLNGKLSQSTVNNSSIYNHNNDSPFF. Positions 387-471 are enriched in low complexity; that stretch reads NSNNNNNINN…SSSYSNNNNN (85 aa).

Belongs to the ABC transporter superfamily.

In Dictyostelium discoideum (Social amoeba), this protein is ABC transporter H family member 2 (abcH2).